The primary structure comprises 489 residues: Betaine aldehyde dehydrogenase (489 aa).

K(+) contacts are provided by threonine 26 and aspartate 93. 150–152 (GAW) contributes to the NAD(+) binding site. Lysine 162 acts as the Charge relay system in catalysis. 176-179 (KPSE) is a binding site for NAD(+). Residue valine 180 participates in K(+) binding. 229–232 (GVET) provides a ligand contact to NAD(+). Leucine 245 is a K(+) binding site. The Proton acceptor role is filled by glutamate 251. Glycine 253, cysteine 285, and glutamate 386 together coordinate NAD(+). Cysteine 285 (nucleophile) is an active-site residue. Residue cysteine 285 is modified to Cysteine sulfenic acid (-SOH). K(+) is bound by residues lysine 456 and glycine 459. The active-site Charge relay system is glutamate 463.

Belongs to the aldehyde dehydrogenase family. Dimer of dimers. It depends on K(+) as a cofactor.

It catalyses the reaction betaine aldehyde + NAD(+) + H2O = glycine betaine + NADH + 2 H(+). It functions in the pathway amine and polyamine biosynthesis; betaine biosynthesis via choline pathway; betaine from betaine aldehyde: step 1/1. Involved in the biosynthesis of the osmoprotectant glycine betaine. Catalyzes the irreversible oxidation of betaine aldehyde to the corresponding acid. The protein is Betaine aldehyde dehydrogenase of Burkholderia cenocepacia (strain ATCC BAA-245 / DSM 16553 / LMG 16656 / NCTC 13227 / J2315 / CF5610) (Burkholderia cepacia (strain J2315)).